Consider the following 131-residue polypeptide: Profilin (131 aa).

Belongs to the profilin family. As to quaternary structure, occurs in many kinds of cells as a complex with monomeric actin in a 1:1 ratio.

It is found in the cytoplasm. It localises to the cytoskeleton. Binds to actin and affects the structure of the cytoskeleton. At high concentrations, profilin prevents the polymerization of actin, whereas it enhances it at low concentrations. Has a high affinity for poly-proline. In Citrullus lanatus (Watermelon), this protein is Profilin.